The sequence spans 311 residues: Aspartate carbamoyltransferase catalytic subunit (311 aa).

2 residues coordinate carbamoyl phosphate: arginine 55 and threonine 56. L-aspartate is bound at residue lysine 85. Carbamoyl phosphate is bound by residues arginine 106, histidine 135, and glutamine 138. L-aspartate contacts are provided by arginine 168 and arginine 230. The carbamoyl phosphate site is built by leucine 268 and proline 269.

This sequence belongs to the aspartate/ornithine carbamoyltransferase superfamily. ATCase family. As to quaternary structure, heterododecamer (2C3:3R2) of six catalytic PyrB chains organized as two trimers (C3), and six regulatory PyrI chains organized as three dimers (R2).

The enzyme catalyses carbamoyl phosphate + L-aspartate = N-carbamoyl-L-aspartate + phosphate + H(+). Its pathway is pyrimidine metabolism; UMP biosynthesis via de novo pathway; (S)-dihydroorotate from bicarbonate: step 2/3. In terms of biological role, catalyzes the condensation of carbamoyl phosphate and aspartate to form carbamoyl aspartate and inorganic phosphate, the committed step in the de novo pyrimidine nucleotide biosynthesis pathway. The sequence is that of Aspartate carbamoyltransferase catalytic subunit from Escherichia coli O139:H28 (strain E24377A / ETEC).